Reading from the N-terminus, the 385-residue chain is MKNLTILGSTGSIGVSTLDVVAAYPDMFRVVALTAGNNLELLKTQIETFRPELVSVLTAEKAQALSRSLTGKKPEIMHGVEGMIAAATASETTMVVAAIVGAAGLVPTTAAIMAGKDVALANKETLVTAGHLVMQMVREKKVKLYPVDSEHCAVFQSMAGHRSQDIARVILTASGGPFLNWGREQLQGATVADALNHPNWSMGRKITVDSATMMNKGLEVIEARWLFDIPVQRIAVNIHPQSIIHSMVEYVDGSVMAQLGTPDMKGPIAYALTYPGRVPSGVKALDLTALSGLTFFKPDTDRFPALKLAYRAADAGESMPAVMNAANEIAVEAFLAGRIGFMAIAEAIEKVMDLHEPHALASIEEVLETDRWGRRTAKEVLGVGC.

Threonine 10, glycine 11, serine 12, isoleucine 13, glycine 36, asparagine 38, and asparagine 122 together coordinate NADPH. Position 123 (lysine 123) interacts with 1-deoxy-D-xylulose 5-phosphate. Position 124 (glutamate 124) interacts with NADPH. A Mn(2+)-binding site is contributed by aspartate 148. Residues serine 149, glutamate 150, serine 174, and histidine 197 each contribute to the 1-deoxy-D-xylulose 5-phosphate site. Glutamate 150 contributes to the Mn(2+) binding site. An NADPH-binding site is contributed by glycine 203. Serine 210, asparagine 215, lysine 216, and glutamate 219 together coordinate 1-deoxy-D-xylulose 5-phosphate. Glutamate 219 is a Mn(2+) binding site.

It belongs to the DXR family. The cofactor is Mg(2+). It depends on Mn(2+) as a cofactor.

The catalysed reaction is 2-C-methyl-D-erythritol 4-phosphate + NADP(+) = 1-deoxy-D-xylulose 5-phosphate + NADPH + H(+). The protein operates within isoprenoid biosynthesis; isopentenyl diphosphate biosynthesis via DXP pathway; isopentenyl diphosphate from 1-deoxy-D-xylulose 5-phosphate: step 1/6. In terms of biological role, catalyzes the NADPH-dependent rearrangement and reduction of 1-deoxy-D-xylulose-5-phosphate (DXP) to 2-C-methyl-D-erythritol 4-phosphate (MEP). The polypeptide is 1-deoxy-D-xylulose 5-phosphate reductoisomerase (Geobacter sp. (strain M21)).